Consider the following 799-residue polypeptide: MRCPSLARLPHRAVSGLTRTPVRFQSQAFLTARCASTAALRSATPVHQSVLNRRYQQTRNASGTAAAVLEAAAQTPDSLSQEAIIENLDPVEAERLSRVRNIGIAAHIDSGKTTCTERVLFYTGRIKAIHEVRGRDSVGAKMDSMDLEREKGITIQSAATFCDWVKKDEDGKEQKYHMNLIDTPGHIDFTIEVERALRVLDGAVMILCAVSGVQSQTITVDRQMRRYNVPRISFVNKMDRMGANPFKSVDQINTKLKLPAAAVQVPIGAEDEFEGVVDLVRMKAIYNQGSNGENIVVKDEIPEKVRELAEERRRMLIETLADVDDDMAEIFLNEEEPTEKQIKDAIRRATIGLKFTPVFMGSALANKSVQPMLDGVIDYLPNPSEVQNTALDKKRNEAQVKLVPYNALPLVCLAFKLEESSFGQLTYIRVYQGTLRKGSYVFNARTDKKVRIPRIVRMHSNEMEDVSEIGAGEICAVFGVECASGDSFTDGQLGYTMSSMFVPEPVISLSIKPKHSKDYANFSKAMARFQREDPTFRVSFDPESEQTLISGMGELHLDIYVERMRREYRVDCETGPPQVAYRETISQRVEFDHLLKKQSGGPGDYARVVGWLEPTGKLEENQFEEQIVGGSISEKFIFACEKGFHLSCEKGPLIGHKVLGTKMVINDGATHMTDSSEMAFKNATQQAFRKAFQEGNPAVLEPMMKTVVTAPAEFQGDVIGLLNKRGATINDSEVGVDEFTVYADCSLNGMFGFSSHLRAATQGKGEYTMEFSHYEKAPPQEQRELVKKYLQAQADRHKK.

A mitochondrion-targeting transit peptide spans Met-1–Phe-24. Positions Ser-97–Ser-384 constitute a tr-type G domain. Residues Ala-106–Thr-113, Asp-182–His-186, and Asn-236–Asp-239 contribute to the GTP site.

Belongs to the TRAFAC class translation factor GTPase superfamily. Classic translation factor GTPase family. EF-G/EF-2 subfamily.

The protein localises to the mitochondrion. It participates in protein biosynthesis; polypeptide chain elongation. Functionally, mitochondrial GTPase that catalyzes the GTP-dependent ribosomal translocation step during translation elongation. During this step, the ribosome changes from the pre-translocational (PRE) to the post-translocational (POST) state as the newly formed A-site-bound peptidyl-tRNA and P-site-bound deacylated tRNA move to the P and E sites, respectively. Catalyzes the coordinated movement of the two tRNA molecules, the mRNA and conformational changes in the ribosome. The sequence is that of Elongation factor G, mitochondrial (mef1) from Emericella nidulans (strain FGSC A4 / ATCC 38163 / CBS 112.46 / NRRL 194 / M139) (Aspergillus nidulans).